Reading from the N-terminus, the 480-residue chain is Cysteine--tRNA ligase (480 aa).

Residue Cys29 participates in Zn(2+) binding. The 'HIGH' region motif lies at 31–41 (VTVYDHCHIGH). Residues Cys209, His234, and Glu238 each contribute to the Zn(2+) site. The 'KMSKS' region motif lies at 266–270 (KMSKS). Position 269 (Lys269) interacts with ATP.

The protein belongs to the class-I aminoacyl-tRNA synthetase family. Monomer. Requires Zn(2+) as cofactor.

The protein localises to the cytoplasm. It catalyses the reaction tRNA(Cys) + L-cysteine + ATP = L-cysteinyl-tRNA(Cys) + AMP + diphosphate. This Geobacter sp. (strain M21) protein is Cysteine--tRNA ligase.